A 651-amino-acid polypeptide reads, in one-letter code: Apical membrane antigen 1-like protein (651 aa).

The first 41 residues, 1–41 (MPTESRSILARAEETRCRHLSRLLRAGLVFLLCDVLTSCLA), serve as a signal peptide directing secretion. A propeptide spans 42–81 (TPELQNTVIRSSKAHHLQLLFSSRSTPAVKFPLDATLSAP) (removed in mature form). Topologically, residues 42–570 (TPELQNTVIR…VEKEGSGGNT (529 aa)) are extracellular. 7 disulfides stabilise this stretch: C141-C309, C215-C248, C264-C277, C327-C417, C347-C408, C441-C463, and C453-C475. An N-linked (GlcNAc...) asparagine glycan is attached at N230. One copy of the 1; approximate repeat lies at 483–486 (PPVK). The interval 483–531 (PPVKPPVEPPVEPPVEPPVEPPVEPPVEPPVEPPVEPPVEPPVVEPPTE) is 12 x 4 AA approximate tandem-repeats of P-P-V-E. Residues 483 to 547 (PPVKPPVEPP…EPPVVLPPTP (65 aa)) are compositionally biased toward pro residues. A disordered region spans residues 483–567 (PPVKPPVEPP…DETVEKEGSG (85 aa)). 9 tandem repeats follow at residues 487-490 (PPVE), 491-494 (PPVE), 495-498 (PPVE), 499-502 (PPVE), 503-506 (PPVE), 507-510 (PPVE), 511-514 (PPVE), 515-518 (PPVE), and 519-522 (PPVE). The 11; approximate repeat unit spans residues 523 to 527 (PPVVE). Residues 528-531 (PPTE) form a 12; approximate repeat. A helical membrane pass occupies residues 571 to 591 (ALIAGSVLGMLIILALVGTCV). The Cytoplasmic segment spans residues 592–651 (GFYYRKRPLPPTERPTVEASGGREVEGPSDVAVPPDHSWWGEGEHETESLLGSRAVDAEF). The interval 598 to 651 (RPLPPTERPTVEASGGREVEGPSDVAVPPDHSWWGEGEHETESLLGSRAVDAEF) is disordered.

The protein belongs to the apicomplexan parasites AMA1 family. Post-translationally, proteolytically cleaved within its transmembrane domain, releasing a soluble form from the cell surface.

It localises to the cell membrane. Its subcellular location is the secreted. May play a role in host cell invasion. This chain is Apical membrane antigen 1-like protein, found in Toxoplasma gondii (strain ATCC 50861 / VEG).